We begin with the raw amino-acid sequence, 353 residues long: Photosystem II protein D1 (353 aa).

Position 2 is an N-acetylthreonine (threonine 2). The residue at position 2 (threonine 2) is a Phosphothreonine. Transmembrane regions (helical) follow at residues 29-46 (YIGWFGVLMIPTLLTATS), 118-133 (HFLLGVACYMGREWEL), and 142-156 (WIAVAYSAPVAAATA). Position 118 (histidine 118) interacts with chlorophyll a. Tyrosine 126 contributes to the pheophytin a binding site. [CaMn4O5] cluster-binding residues include aspartate 170 and glutamate 189. The helical transmembrane segment at 197–218 (FHMLGVAGVFGGSLFSAMHGSL) threads the bilayer. Histidine 198 provides a ligand contact to chlorophyll a. A quinone is bound by residues histidine 215 and 264 to 265 (SF). Histidine 215 is a binding site for Fe cation. Residue histidine 272 coordinates Fe cation. Residues 274–288 (FLAAWPVVGIWFTAL) form a helical membrane-spanning segment. Positions 332, 333, 342, and 344 each coordinate [CaMn4O5] cluster. A propeptide spanning residues 345-353 (AVEAPSTIG) is cleaved from the precursor.

The protein belongs to the reaction center PufL/M/PsbA/D family. PSII is composed of 1 copy each of membrane proteins PsbA, PsbB, PsbC, PsbD, PsbE, PsbF, PsbH, PsbI, PsbJ, PsbK, PsbL, PsbM, PsbT, PsbX, PsbY, PsbZ, Psb30/Ycf12, at least 3 peripheral proteins of the oxygen-evolving complex and a large number of cofactors. It forms dimeric complexes. The cofactor is The D1/D2 heterodimer binds P680, chlorophylls that are the primary electron donor of PSII, and subsequent electron acceptors. It shares a non-heme iron and each subunit binds pheophytin, quinone, additional chlorophylls, carotenoids and lipids. D1 provides most of the ligands for the Mn4-Ca-O5 cluster of the oxygen-evolving complex (OEC). There is also a Cl(-1) ion associated with D1 and D2, which is required for oxygen evolution. The PSII complex binds additional chlorophylls, carotenoids and specific lipids.. In terms of processing, tyr-161 forms a radical intermediate that is referred to as redox-active TyrZ, YZ or Y-Z. C-terminally processed by CTPA; processing is essential to allow assembly of the oxygen-evolving complex and thus photosynthetic growth.

Its subcellular location is the plastid. The protein localises to the chloroplast thylakoid membrane. It carries out the reaction 2 a plastoquinone + 4 hnu + 2 H2O = 2 a plastoquinol + O2. In terms of biological role, photosystem II (PSII) is a light-driven water:plastoquinone oxidoreductase that uses light energy to abstract electrons from H(2)O, generating O(2) and a proton gradient subsequently used for ATP formation. It consists of a core antenna complex that captures photons, and an electron transfer chain that converts photonic excitation into a charge separation. The D1/D2 (PsbA/PsbD) reaction center heterodimer binds P680, the primary electron donor of PSII as well as several subsequent electron acceptors. The polypeptide is Photosystem II protein D1 (Lemna minor (Common duckweed)).